Here is a 181-residue protein sequence, read N- to C-terminus: Crossover junction endodeoxyribonuclease RuvC (181 aa).

Catalysis depends on residues Asp-7, Glu-67, and Asp-139. 3 residues coordinate Mg(2+): Asp-7, Glu-67, and Asp-139.

The protein belongs to the RuvC family. As to quaternary structure, homodimer which binds Holliday junction (HJ) DNA. The HJ becomes 2-fold symmetrical on binding to RuvC with unstacked arms; it has a different conformation from HJ DNA in complex with RuvA. In the full resolvosome a probable DNA-RuvA(4)-RuvB(12)-RuvC(2) complex forms which resolves the HJ. Mg(2+) is required as a cofactor.

The protein resides in the cytoplasm. It catalyses the reaction Endonucleolytic cleavage at a junction such as a reciprocal single-stranded crossover between two homologous DNA duplexes (Holliday junction).. Functionally, the RuvA-RuvB-RuvC complex processes Holliday junction (HJ) DNA during genetic recombination and DNA repair. Endonuclease that resolves HJ intermediates. Cleaves cruciform DNA by making single-stranded nicks across the HJ at symmetrical positions within the homologous arms, yielding a 5'-phosphate and a 3'-hydroxyl group; requires a central core of homology in the junction. The consensus cleavage sequence is 5'-(A/T)TT(C/G)-3'. Cleavage occurs on the 3'-side of the TT dinucleotide at the point of strand exchange. HJ branch migration catalyzed by RuvA-RuvB allows RuvC to scan DNA until it finds its consensus sequence, where it cleaves and resolves the cruciform DNA. This Bordetella avium (strain 197N) protein is Crossover junction endodeoxyribonuclease RuvC.